The primary structure comprises 607 residues: UvrABC system protein C (607 aa).

Residues 16–94 (GRPGVYRMFD…IKEWRPPYNI (79 aa)) enclose the GIY-YIG domain. The UVR domain occupies 203–238 (QQLGNELNAEMEKAAMALDFEKAAELRDQIALLRRV).

It belongs to the UvrC family. As to quaternary structure, interacts with UvrB in an incision complex.

Its subcellular location is the cytoplasm. In terms of biological role, the UvrABC repair system catalyzes the recognition and processing of DNA lesions. UvrC both incises the 5' and 3' sides of the lesion. The N-terminal half is responsible for the 3' incision and the C-terminal half is responsible for the 5' incision. The sequence is that of UvrABC system protein C from Pseudomonas putida (strain ATCC 47054 / DSM 6125 / CFBP 8728 / NCIMB 11950 / KT2440).